Reading from the N-terminus, the 262-residue chain is Ribosomal RNA small subunit methyltransferase A (262 aa).

6 residues coordinate S-adenosyl-L-methionine: His-16, Leu-18, Gly-43, Glu-64, Asp-89, and Asn-109.

It belongs to the class I-like SAM-binding methyltransferase superfamily. rRNA adenine N(6)-methyltransferase family. RsmA subfamily.

The protein resides in the cytoplasm. It carries out the reaction adenosine(1518)/adenosine(1519) in 16S rRNA + 4 S-adenosyl-L-methionine = N(6)-dimethyladenosine(1518)/N(6)-dimethyladenosine(1519) in 16S rRNA + 4 S-adenosyl-L-homocysteine + 4 H(+). Its function is as follows. Specifically dimethylates two adjacent adenosines (A1518 and A1519) in the loop of a conserved hairpin near the 3'-end of 16S rRNA in the 30S particle. May play a critical role in biogenesis of 30S subunits. The chain is Ribosomal RNA small subunit methyltransferase A from Xanthomonas euvesicatoria pv. vesicatoria (strain 85-10) (Xanthomonas campestris pv. vesicatoria).